A 253-amino-acid chain; its full sequence is 5'/3'-nucleotidase SurE (253 aa).

Residues Asp-8, Asp-9, Ser-39, and Asn-92 each coordinate a divalent metal cation.

It belongs to the SurE nucleotidase family. It depends on a divalent metal cation as a cofactor.

The protein resides in the cytoplasm. It carries out the reaction a ribonucleoside 5'-phosphate + H2O = a ribonucleoside + phosphate. The catalysed reaction is a ribonucleoside 3'-phosphate + H2O = a ribonucleoside + phosphate. The enzyme catalyses [phosphate](n) + H2O = [phosphate](n-1) + phosphate + H(+). Nucleotidase with a broad substrate specificity as it can dephosphorylate various ribo- and deoxyribonucleoside 5'-monophosphates and ribonucleoside 3'-monophosphates with highest affinity to 3'-AMP. Also hydrolyzes polyphosphate (exopolyphosphatase activity) with the preference for short-chain-length substrates (P20-25). Might be involved in the regulation of dNTP and NTP pools, and in the turnover of 3'-mononucleotides produced by numerous intracellular RNases (T1, T2, and F) during the degradation of various RNAs. The sequence is that of 5'/3'-nucleotidase SurE from Salmonella paratyphi B (strain ATCC BAA-1250 / SPB7).